Reading from the N-terminus, the 1208-residue chain is Transient receptor potential cation channel subfamily M member 4 (1208 aa).

The Cytoplasmic portion of the chain corresponds to Met1–Ala776. Arg172, Arg215, and Leu226 together coordinate ATP. Ca(2+) contacts are provided by Asp271, Ala393, Asp396, and Glu397. The ATP site is built by Arg422 and Gly449. 2 positions are modified to phosphoserine: Ser527 and Ser538. Residues Phe777 to Val797 traverse the membrane as a helical segment. The Extracellular portion of the chain corresponds to Asp798 to Glu808. A helical membrane pass occupies residues Leu809–Gly829. Residues Glu822 and Gln825 each coordinate Ca(2+). Over Gly830–Thr857 the chain is Cytoplasmic. A helical transmembrane segment spans residues Trp858–Thr878. Ca(2+)-binding residues include Asn859 and Asp862. The Extracellular segment spans residues Pro879–Gly880. The helical transmembrane segment at Leu881 to Phe904 threads the bilayer. Residues Thr905–Val924 are Cytoplasmic-facing. The helical transmembrane segment at Phe925 to Ile945 threads the bilayer. At Leu946 to Leu957 the chain is on the extracellular side. Residues Arg958–Asp978 constitute an intramembrane region (pore-forming). The short motif at Phe969 to Gln971 is the Selectivity filter element. At Val979–Leu1013 the chain is on the extracellular side. A disulfide bridge connects residues Cys987 and Cys1005. A helical transmembrane segment spans residues Val1014–Ile1034. The Cytoplasmic portion of the chain corresponds to Ala1035–Asp1208. Residues Ala1070–Glu1170 are calmodulin-binding. A coiled-coil region spans residues Leu1128–Leu1180. Residues Gln1130–Arg1135 form a mediates modulation by decavanadate and PIP2-binding region. Ser1139 and Ser1146 each carry phosphoserine; by PKC. The disordered stretch occupies residues His1189 to Asp1208. Pro residues predominate over residues Pro1195–Asp1208.

Belongs to the transient receptor (TC 1.A.4) family. LTrpC subfamily. TRPM4 sub-subfamily. Homotetramer. Post-translationally, phosphorylation by PKC leads to increase the sensitivity to Ca(2+). Sumoylated. Desumoylated by SENP1. In terms of tissue distribution, isoform 1 is highly expressed in the testis with a moderate expression in the brain, spleen and thymus. Isoform 2 is only expressed in the brain and spleen.

It is found in the cell membrane. It localises to the endoplasmic reticulum. The protein localises to the golgi apparatus. The enzyme catalyses Na(+)(in) = Na(+)(out). The catalysed reaction is K(+)(in) = K(+)(out). Its activity is regulated as follows. Gating is voltage-dependent and repressed by decavanadate. Calmodulin-binding confers the Ca(2+) sensitivity. ATP is able to restore Ca(2+) sensitivity after desensitization. Phosphatidylinositol 4,5-bisphosphate (PIP2)-binding strongly enhances activity, by increasing the channel's Ca(2+) sensitivity and shifting its voltage dependence of activation towards negative potentials. Activity is also enhanced by 3,5-bis(trifluoromethyl)pyrazole derivative (BTP2). Exhibits pronounced temperature sensitivity, with activities strongly intensifying near physiological temperatures. TRPM4 can adopt distinct conformations at different temperatures, markedly influencing where and how ligands interact with them. Functionally, calcium-activated selective cation channel that mediates membrane depolarization. While it is activated by increase in intracellular Ca(2+), it is impermeable to it. Mediates transport of monovalent cations (Na(+) &gt; K(+) &gt; Cs(+) &gt; Li(+)), leading to depolarize the membrane. It thereby plays a central role in cadiomyocytes, neurons from entorhinal cortex, dorsal root and vomeronasal neurons, endocrine pancreas cells, kidney epithelial cells, cochlea hair cells etc. Participates in T-cell activation by modulating Ca(2+) oscillations after T lymphocyte activation, which is required for NFAT-dependent IL2 production. Involved in myogenic constriction of cerebral arteries. Controls insulin secretion in pancreatic beta-cells. May also be involved in pacemaking or could cause irregular electrical activity under conditions of Ca(2+) overload. Affects T-helper 1 (Th1) and T-helper 2 (Th2) cell motility and cytokine production through differential regulation of calcium signaling and NFATC1 localization. Enhances cell proliferation through up-regulation of the beta-catenin signaling pathway. Plays a role in keratinocyte differentiation. Lacks channel activity. In Rattus norvegicus (Rat), this protein is Transient receptor potential cation channel subfamily M member 4 (Trpm4).